Reading from the N-terminus, the 457-residue chain is MDKLNKITVPASQKLRQLQKMVHDIKNNEGGIMDKIKKLKVKGPPSVPRRDYALDSPADEEEQWSDDFDSDYENPDEHSDSEMYVMPAEETGDDSYEPPPAEQQTRVVHPALPFTRGEYVDNRSSQRHSPPFSKTLPSKPSWPSAKARLASTLPAPNSLQKPQVPPKPKDLLEDEADYVVPVEDNDENYIHPRESSPPPAEKAPMVNRSTKPNSSSKHMSPPGTVAGRNSGVWDSKSSLPAAPSPLPRAGKKPATPLKTTPVPPLPNASNVCEEKPVPAERHRGSSHRQDTVQSPVFPPTQKPVHQKPVPLPRFPEAGSPAADGPFHSFPFNSTFADQEAELLGKPWYAGACDRKSAEEALHRSNKDGSFLIRKSSGHDSKQPYTLVAFFNKRVYNIPVRFIEATKQYALGKKKNGEEYFGSVVEIVNSHQHNPLVLIDSQNNTKDSTRLKYAVKVS.

Residues 36-306 (IKKLKVKGPP…FPPTQKPVHQ (271 aa)) form a disordered region. Positions 57–74 (PADEEEQWSDDFDSDYEN) are enriched in acidic residues. 5 positions are modified to phosphotyrosine; by SYK: tyrosine 72, tyrosine 84, tyrosine 96, tyrosine 178, and tyrosine 189. A compositionally biased stretch (acidic residues) spans 172-187 (LEDEADYVVPVEDNDE). The segment covering 207 to 218 (NRSTKPNSSSKH) has biased composition (polar residues). Basic and acidic residues predominate over residues 272–290 (CEEKPVPAERHRGSSHRQD). One can recognise an SH2 domain in the interval 347–454 (WYAGACDRKS…KDSTRLKYAV (108 aa)).

Associates with PLCG1, VAV1 and NCK1 in a B-cell antigen receptor-dependent fashion. Interacts with VAV3, PLCG2 and GRB2. Interacts through its SH2 domain with CD79A. Interacts (via SH2 domain) with SYK; phosphorylated and activated by SYK. Interacts (via SH2 domain) with SCIMP; this interaction is dependent on phosphorylation of SCIMP 'Tyr-120'. In terms of processing, following BCR activation, phosphorylated on tyrosine residues by SYK and LYN. When phosphorylated, serves as a scaffold to assemble downstream targets of antigen activation, including PLCG1, VAV1, GRB2 and NCK1. Phosphorylation of Tyr-84, Tyr-178 and Tyr-189 facilitates PLCG1 binding. Phosphorylation of Tyr-72 facilitates VAV1 and NCK1 binding. Phosphorylation is required for both Ca(2+) and MAPK signaling pathways. Phosphorylation of Tyr-96 is required for the binding of BTK. Expressed in the spleen and weakly in thymus, no expression was seen in liver, testis, or brain. Expressed in B-cell lines representing different developmental stages from the pre-B to the plasma cell stage, but not in a T-cell or a fibroblast cell line.

It localises to the cytoplasm. The protein localises to the cell membrane. Functions as a central linker protein, downstream of the B-cell receptor (BCR), bridging the SYK kinase to a multitude of signaling pathways and regulating biological outcomes of B-cell function and development. Plays a role in the activation of ERK/EPHB2, MAP kinase p38 and JNK. Modulates AP1 activation. Important for the activation of NF-kappa-B and NFAT. Plays an important role in BCR-mediated PLCG1 and PLCG2 activation and Ca(2+) mobilization and is required for trafficking of the BCR to late endosomes. However, does not seem to be required for pre-BCR-mediated activation of MAP kinase and phosphatidyl-inositol 3 (PI3) kinase signaling. May be required for the RAC1-JNK pathway. Plays a critical role in orchestrating the pro-B cell to pre-B cell transition. May play an important role in BCR-induced B-cell apoptosis. This Mus musculus (Mouse) protein is B-cell linker protein (Blnk).